The sequence spans 607 residues: Aspartate--tRNA(Asp/Asn) ligase (607 aa).

An L-aspartate-binding site is contributed by glutamate 173. Residues 197-200 (QLFK) are aspartate. Arginine 219 provides a ligand contact to L-aspartate. ATP is bound by residues 219–221 (RDE) and glutamine 228. Histidine 456 serves as a coordination point for L-aspartate. Glutamate 498 contributes to the ATP binding site. Residue arginine 505 participates in L-aspartate binding. 550-553 (GLDR) is a binding site for ATP.

It belongs to the class-II aminoacyl-tRNA synthetase family. Type 1 subfamily. Homodimer.

The protein localises to the cytoplasm. It carries out the reaction tRNA(Asx) + L-aspartate + ATP = L-aspartyl-tRNA(Asx) + AMP + diphosphate. Its function is as follows. Aspartyl-tRNA synthetase with relaxed tRNA specificity since it is able to aspartylate not only its cognate tRNA(Asp) but also tRNA(Asn). Reaction proceeds in two steps: L-aspartate is first activated by ATP to form Asp-AMP and then transferred to the acceptor end of tRNA(Asp/Asn). The sequence is that of Aspartate--tRNA(Asp/Asn) ligase from Magnetococcus marinus (strain ATCC BAA-1437 / JCM 17883 / MC-1).